A 536-amino-acid polypeptide reads, in one-letter code: Small conductance calcium-activated potassium channel protein 1 (536 aa).

A disordered region spans residues 1–90 (MSSRSHNGSV…KPPTVSHRLG (90 aa)). Residues 65-75 (QEEEEEEEDED) show a composition bias toward acidic residues. A helical membrane pass occupies residues 107–127 (LIFGMFGIVVMVTETELSWGV). A helical transmembrane segment spans residues 136 to 156 (FALKCLISLSTVILLGLVILY). A helical membrane pass occupies residues 224 to 244 (VLLSIPMFLRLYLLARVMLLH). A helical transmembrane segment spans residues 273–293 (LMTICPGTVLLVFSISSWIVA). A helical transmembrane segment spans residues 313 to 333 (FLGAMWLISITFLSIGYGDMV). Positions 342–362 (VCLLTGIMGAGCTALVVAVVA) form an intramembrane region, pore-forming. Positions 380-459 (DTQLTKRVKN…LADLAKAQSI (80 aa)) are calmodulin-binding. The chain crosses the membrane as a helical span at residues 487–507 (VLGASLQALPSLIAQAICPLP). The tract at residues 514 to 536 (SHLTTAAQSPQSHWLPTTASDCG) is disordered. Over residues 515 to 536 (HLTTAAQSPQSHWLPTTASDCG) the composition is skewed to polar residues.

This sequence belongs to the potassium channel KCNN family. KCa2.1/KCNN1 subfamily. In terms of assembly, homodimer. Heteromultimer with KCNN2 and KCNN3. The complex is composed of 4 channel subunits each of which binds to a calmodulin subunit which regulates the channel activity through calcium-binding. Interacts with calmodulin. As to expression, widely expressed including brain.

It is found in the membrane. The protein resides in the cytoplasm. The protein localises to the myofibril. It localises to the sarcomere. Its subcellular location is the z line. It catalyses the reaction K(+)(in) = K(+)(out). Inhibited by bee venom neurotoxin apamin. Inhibited by d-tubocurarine and tetraethylammonium (TEA). Small conductance calcium-activated potassium channel that mediates the voltage-independent transmembrane transfer of potassium across the cell membrane through a constitutive interaction with calmodulin which binds the intracellular calcium allowing its opening. The current is characterized by a voltage-independent activation, an intracellular calcium concentration increase-dependent activation and a single-channel conductance of about 3 picosiemens. Also presents an inwardly rectifying current, thus reducing its already small outward conductance of potassium ions, which is particularly the case when the membrane potential displays positive values, above + 20 mV. Activation is followed by membrane hyperpolarization. Thought to regulate neuronal excitability by contributing to the slow component of synaptic afterhyperpolarization. The sequence is that of Small conductance calcium-activated potassium channel protein 1 from Rattus norvegicus (Rat).